We begin with the raw amino-acid sequence, 244 residues long: Venom nerve growth factor 3 (244 aa).

The signal sequence occupies residues 1–18 (MSMLCYTLIIAFLIGIWA). Positions 19–125 (APKSEDNVPL…TLNRNIRAKR (107 aa)) are excised as a propeptide. Basic and acidic residues predominate over residues 47–66 (GLKTSRNTDQRHPAPKKAED). The disordered stretch occupies residues 47–67 (GLKTSRNTDQRHPAPKKAEDQ). Disulfide bonds link cysteine 139-cysteine 205, cysteine 181-cysteine 233, and cysteine 193-cysteine 235.

The protein belongs to the NGF-beta family. As to quaternary structure, homodimer; non-covalently linked. As to expression, expressed by the venom gland.

It localises to the secreted. Its function is as follows. Nerve growth factor is important for the development and maintenance of the sympathetic and sensory nervous systems. It stimulates division and differentiation of sympathetic and embryonic sensory neurons as well as basal forebrain cholinergic neurons in the brain. Its relevance in the snake venom is not clear. However, it has been shown to inhibit metalloproteinase-dependent proteolysis of platelet glycoprotein Ib alpha, suggesting a metalloproteinase inhibition to prevent metalloprotease autodigestion and/or protection against prey proteases. Binds a lipid between the two protein chains in the homodimer. The lipid-bound form promotes histamine relase from mouse mast cells, contrary to the lipid-free form. In Notechis scutatus scutatus (Mainland tiger snake), this protein is Venom nerve growth factor 3.